Here is a 416-residue protein sequence, read N- to C-terminus: E3 ubiquitin-protein ligase RNFT1 (416 aa).

2 disordered regions span residues 1–50 and 68–117; these read MKHR…MSLP and DLSS…DSRE. Over residues 7-19 the composition is skewed to basic and acidic residues; it reads HERQSSTESKNLK. Polar residues-rich tracts occupy residues 20–45 and 68–80; these read ETTQ…SPSA and DLSS…VARS. Residues 81-100 are compositionally biased toward basic residues; sequence NSRRVRPSTHGRSPSRHGHT. The next 6 membrane-spanning stretches (helical) occupy residues 146 to 166, 184 to 204, 214 to 234, 237 to 257, 265 to 287, and 302 to 322; these read LVVQ…TFLY, LQCL…YYTF, VFMN…VVGI, FIGK…PSFV, YWYM…PVWF, and WHFG…IIFG. Residues 349-400 form a required for ubiquitin ligase activity and for protection against ER stress-induced cell death region; that stretch reads CSEADGMCAICQAEFTKPIALICQHVFCEECISSWFNKEKTCPLCRTLISNH. Residues 356 to 394 form an RING-type zinc finger; that stretch reads CAICQAEFTKPIALICQHVFCEECISSWFNKEKTCPLCR.

It localises to the endoplasmic reticulum membrane. The enzyme catalyses S-ubiquitinyl-[E2 ubiquitin-conjugating enzyme]-L-cysteine + [acceptor protein]-L-lysine = [E2 ubiquitin-conjugating enzyme]-L-cysteine + N(6)-ubiquitinyl-[acceptor protein]-L-lysine.. It participates in protein modification; protein ubiquitination. In terms of biological role, E3 ubiquitin-protein ligase that acts in the endoplasmic reticulum (ER)-associated degradation (ERAD) pathway, which targets misfolded proteins that accumulate in the endoplasmic reticulum (ER) for ubiquitination and subsequent proteasome-mediated degradation. Protects cells from ER stress-induced apoptosis. In Xenopus laevis (African clawed frog), this protein is E3 ubiquitin-protein ligase RNFT1 (rnft1).